Consider the following 430-residue polypeptide: Enolase (430 aa).

Gln167 contributes to the (2R)-2-phosphoglycerate binding site. Residue Glu209 is the Proton donor of the active site. Mg(2+) contacts are provided by Asp246, Glu287, and Asp314. Residues Lys339, Arg368, Ser369, and Lys390 each coordinate (2R)-2-phosphoglycerate. The active-site Proton acceptor is the Lys339.

Belongs to the enolase family. Mg(2+) serves as cofactor.

It localises to the cytoplasm. It is found in the secreted. Its subcellular location is the cell surface. The enzyme catalyses (2R)-2-phosphoglycerate = phosphoenolpyruvate + H2O. Its pathway is carbohydrate degradation; glycolysis; pyruvate from D-glyceraldehyde 3-phosphate: step 4/5. In terms of biological role, catalyzes the reversible conversion of 2-phosphoglycerate (2-PG) into phosphoenolpyruvate (PEP). It is essential for the degradation of carbohydrates via glycolysis. The sequence is that of Enolase from Prochlorococcus marinus (strain MIT 9215).